A 194-amino-acid chain; its full sequence is dTTP/UTP pyrophosphatase (194 aa).

D76 (proton acceptor) is an active-site residue.

It belongs to the Maf family. YhdE subfamily. A divalent metal cation is required as a cofactor.

Its subcellular location is the cytoplasm. The enzyme catalyses dTTP + H2O = dTMP + diphosphate + H(+). It catalyses the reaction UTP + H2O = UMP + diphosphate + H(+). Nucleoside triphosphate pyrophosphatase that hydrolyzes dTTP and UTP. May have a dual role in cell division arrest and in preventing the incorporation of modified nucleotides into cellular nucleic acids. The sequence is that of dTTP/UTP pyrophosphatase from Shewanella sp. (strain MR-7).